Here is an 882-residue protein sequence, read N- to C-terminus: Piwi-like protein 3 (882 aa).

The segment covering 1–15 (MPGRARTRARGRARR) has biased composition (basic residues). A disordered region spans residues 1–91 (MPGRARTRAR…EAGLHTAPLQ (91 aa)). The span at 32–46 (SATTQEPPQLQSTPR) shows a compositional bias: polar residues. One can recognise a PAZ domain in the interval 293-406 (TAYDFIKRTS…LIPQLCHMTG (114 aa)). In terms of domain architecture, Piwi spans 578 to 868 (KVICILPNDD…LAYLVGQSIH (291 aa)).

The protein belongs to the argonaute family. Piwi subfamily. Expressed in testis.

Its subcellular location is the cytoplasm. In terms of biological role, may play a role during spermatogenesis by repressing transposable elements and preventing their mobilization, which is essential for the germline integrity. Acts via the piRNA metabolic process, which mediates the repression of transposable elements during meiosis by forming complexes composed of piRNAs and Piwi proteins and govern the methylation and subsequent repression of transposons. Directly binds piRNAs, a class of 24 to 30 nucleotide RNAs that are generated by a Dicer-independent mechanism and are primarily derived from transposons and other repeated sequence elements. Besides their function in transposable elements repression, piRNAs are probably involved in other processes during meiosis such as translation regulation. This is Piwi-like protein 3 (PIWIL3) from Homo sapiens (Human).